Here is an 825-residue protein sequence, read N- to C-terminus: Lon protease (825 aa).

The region spanning 41 to 237 (LPIIFIPNTI…KVIQLLLEQK (197 aa)) is the Lon N-terminal domain. Residue 388–395 (GPPGTGKT) participates in ATP binding. One can recognise a Lon proteolytic domain in the interval 625–805 (SNPPGVVTGL…DEVLYEALGL (181 aa)). Catalysis depends on residues Ser-711 and Lys-754.

Belongs to the peptidase S16 family. As to quaternary structure, homohexamer. Organized in a ring with a central cavity.

Its subcellular location is the cytoplasm. It catalyses the reaction Hydrolysis of proteins in presence of ATP.. Its function is as follows. ATP-dependent serine protease that mediates the selective degradation of mutant and abnormal proteins as well as certain short-lived regulatory proteins. Required for cellular homeostasis and for survival from DNA damage and developmental changes induced by stress. Degrades polypeptides processively to yield small peptide fragments that are 5 to 10 amino acids long. Binds to DNA in a double-stranded, site-specific manner. In Methanosphaera stadtmanae (strain ATCC 43021 / DSM 3091 / JCM 11832 / MCB-3), this protein is Lon protease.